The primary structure comprises 162 residues: Zinc finger protein 593 homolog (162 aa).

The segment at 59–83 (FYCVHCAKYFIDDTAMQAHFRTKVH) adopts a C2H2-type zinc-finger fold. The segment at 110-162 (VKPKKRAMETQPSKEDVVAGKRIRVEVVPEDTDATDSPSTSKTKRKKVEKMET) is disordered. Residues 115-136 (RAMETQPSKEDVVAGKRIRVEV) are compositionally biased toward basic and acidic residues. The segment covering 151 to 162 (KTKRKKVEKMET) has biased composition (basic residues).

This sequence belongs to the ZNF593/BUD20 C2H2-type zinc-finger protein family. In terms of assembly, associates with pre-60S ribosomal particles; released from the pre-60S particle very early in the cytoplasm.

The protein resides in the nucleus. Its subcellular location is the cytoplasm. Involved in pre-60S ribosomal particles maturation by promoting the nuclear export of the 60S ribosome. This Drosophila melanogaster (Fruit fly) protein is Zinc finger protein 593 homolog.